The primary structure comprises 154 residues: Interleukin-2 (154 aa).

An N-terminal signal peptide occupies residues 1-20 (MYKMQLLSCIALTLALVANG). O-linked (GalNAc...) threonine glycosylation occurs at Thr23. The cysteines at positions 78 and 126 are disulfide-linked.

The protein belongs to the IL-2 family.

The protein resides in the secreted. In terms of biological role, cytokine produced by activated CD4-positive helper T-cells and to a lesser extend activated CD8-positive T-cells and natural killer (NK) cells that plays pivotal roles in the immune response and tolerance. Binds to a receptor complex composed of either the high-affinity trimeric IL-2R (IL2RA/CD25, IL2RB/CD122 and IL2RG/CD132) or the low-affinity dimeric IL-2R (IL2RB and IL2RG). Interaction with the receptor leads to oligomerization and conformation changes in the IL-2R subunits resulting in downstream signaling starting with phosphorylation of JAK1 and JAK3. In turn, JAK1 and JAK3 phosphorylate the receptor to form a docking site leading to the phosphorylation of several substrates including STAT5. This process leads to activation of several pathways including STAT, phosphoinositide-3-kinase/PI3K and mitogen-activated protein kinase/MAPK pathways. Functions as a T-cell growth factor and can increase NK-cell cytolytic activity as well. Promotes strong proliferation of activated B-cells and subsequently immunoglobulin production. Plays a pivotal role in regulating the adaptive immune system by controlling the survival and proliferation of regulatory T-cells, which are required for the maintenance of immune tolerance. Moreover, participates in the differentiation and homeostasis of effector T-cell subsets, including Th1, Th2, Th17 as well as memory CD8-positive T-cells. This is Interleukin-2 (IL2) from Delphinapterus leucas (Beluga whale).